The chain runs to 371 residues: SufE-like protein 1, chloroplastic/mitochondrial (371 aa).

The N-terminal 66 residues, Met-1–Ser-66, are a transit peptide targeting the chloroplast and mitochondrion. The active-site Cysteine persulfide intermediate is Cys-131. Cys-131 bears the S-glutathionyl cysteine mark. Residues Val-218–Val-249 form a disordered region.

The protein belongs to the SufE family. Heterotetramer with NFS2. Interacts with NFS2 and NIFS1. Interacts in vitro with GRXS14, GRXS15, GRXS16 and GRXS17, but not with GRXC5. Interacts in vivo only with GRXS14 and GRXS16. In terms of processing, glutathionylated. Glutathionylation strongly reduces the stimulation of NFS2 activity. Expressed in roots, leaves, stems and flowers.

It is found in the plastid. The protein localises to the chloroplast stroma. It localises to the mitochondrion. It functions in the pathway cofactor biosynthesis; iron-sulfur cluster biosynthesis. Its function is as follows. Participates in cysteine desulfurization mediated by NFS2 in chloroplast and NIFS1 in mitochondrion. Activates the cysteine desulfurase activity of NFS2. Cysteine desulfurization mobilizes sulfur from L-cysteine to yield L-alanine and supplies the inorganic sulfur for iron-sulfur (Fe-S) cluster formation. Glutaredoxins regulate SUFE1 activity by inducing its reduction and deglutathionylation. The chain is SufE-like protein 1, chloroplastic/mitochondrial from Arabidopsis thaliana (Mouse-ear cress).